The following is a 543-amino-acid chain: Serine/threonine-protein kinase Chk2 (543 aa).

The tract at residues 1–66 is disordered; it reads MSRESDVEAQ…SGTLSSLETV (66 aa). Residues 8 to 22 are compositionally biased toward polar residues; sequence EAQQSHGSSACSQPH. Positions 23–62 are enriched in low complexity; it reads GSVTQSQGSSSQSQGISSSSTSTMPNSSQSSHSSSGTLSS. Phosphoserine; by PLK3 is present on Ser62. At Thr68 the chain carries Phosphothreonine; by ATM and MAP3K20. A Phosphoserine; by PLK3 modification is found at Ser73. Residues 113–175 form the FHA domain; the sequence is YWFGRDKSCE…NGTFVNTELV (63 aa). The 267-residue stretch at 220 to 486 folds into the Protein kinase domain; the sequence is YIMSKTLGSG…TEEALRHPWL (267 aa). Residues 227 to 234, Lys249, and 302 to 308 each bind ATP; these read GSGACGEV and ELMEGGE. Catalysis depends on Asp347, which acts as the Proton acceptor. ATP-binding positions include 351–352 and Asp368; that span reads EN. The segment at 368–394 is T-loop/activation segment; it reads DFGHSKILGETSLMRTLCGTPTYLAPE. Ser379 carries the phosphoserine; by autocatalysis modification. Phosphothreonine; by autocatalysis is present on residues Thr383 and Thr387. Phosphoserine is present on Ser456. Polar residues predominate over residues 506–517; that stretch reads TALPQVLAQPST. A disordered region spans residues 506 to 538; sequence TALPQVLAQPSTSRKRPREGEAEGAETTKRPAV. Positions 523–534 are enriched in basic and acidic residues; it reads REGEAEGAETTK.

Belongs to the protein kinase superfamily. CAMK Ser/Thr protein kinase family. CHK2 subfamily. In terms of assembly, homodimer. Homodimerization is part of the activation process but the dimer may dissociate following activation. Interacts with PML. Interacts with TP53. Interacts with RB1; phosphorylates RB1. Interacts with BRCA1. Interacts (phosphorylated at Thr-68) with MDC1; requires ATM-mediated phosphorylation of CHEK2. Interacts with TP53BP1; modulates CHEK2 phosphorylation at Thr-68 in response to ionizing radiation. Interacts with CDC25A; phosphorylates CDC25A and mediates its degradation in response to ionizing radiation. Interacts with CUL1; mediates CHEK2 ubiquitination and regulation. Interacts with CDKN2AIP. Interacts (via protein kinase domain) with CCAR2 (via N-terminus). Interacts with SIRT1. The cofactor is Mg(2+). Phosphorylated. Phosphorylated at Ser-73 by PLK3 in response to DNA damage, promoting phosphorylation at Thr-68 by ATM and the G2/M transition checkpoint. Phosphorylation at Thr-68 induces homodimerization. Autophosphorylates at Thr-383 and Thr-387 in the T-loop/activation segment upon dimerization to become fully active and phosphorylate its substrates like for instance CDC25C. DNA damage-induced autophosphorylation at Ser-379 induces CUL1-mediated ubiquitination and regulates the pro-apoptotic function. Phosphorylation at Ser-456 also regulates ubiquitination. Phosphorylated by PLK4. Post-translationally, ubiquitinated. CUL1-mediated ubiquitination regulates the pro-apoptotic function. Ubiquitination may also regulate protein stability. Ubiquitinated by RNF8 via 'Lys-48'-linked ubiquitination. High expression is found in testis, spleen, colon and peripheral blood leukocytes. Low expression is found in other tissues.

It is found in the nucleus. It localises to the PML body. The protein resides in the nucleoplasm. It carries out the reaction L-seryl-[protein] + ATP = O-phospho-L-seryl-[protein] + ADP + H(+). The catalysed reaction is L-threonyl-[protein] + ATP = O-phospho-L-threonyl-[protein] + ADP + H(+). Its activity is regulated as follows. Activated through phosphorylation at Thr-68 by ATM in response to DNA double-strand breaks. Activation is modulated by several mediators including MDC1 and TP53BP1. Induces homodimerization with exchange of the T-loop/activation segment between protomers and transphosphorylation of the protomers. The autophosphorylated kinase dimer is fully active. Negatively regulated by PPM1D through dephosphorylation of Thr-68. Its function is as follows. Serine/threonine-protein kinase which is required for checkpoint-mediated cell cycle arrest, activation of DNA repair and apoptosis in response to the presence of DNA double-strand breaks. May also negatively regulate cell cycle progression during unperturbed cell cycles. Following activation, phosphorylates numerous effectors preferentially at the consensus sequence [L-X-R-X-X-S/T]. Regulates cell cycle checkpoint arrest through phosphorylation of CDC25A, CDC25B and CDC25C, inhibiting their activity. Inhibition of CDC25 phosphatase activity leads to increased inhibitory tyrosine phosphorylation of CDK-cyclin complexes and blocks cell cycle progression. May also phosphorylate NEK6 which is involved in G2/M cell cycle arrest. Regulates DNA repair through phosphorylation of BRCA2, enhancing the association of RAD51 with chromatin which promotes DNA repair by homologous recombination. Also stimulates the transcription of genes involved in DNA repair (including BRCA2) through the phosphorylation and activation of the transcription factor FOXM1. Regulates apoptosis through the phosphorylation of p53/TP53, MDM4 and PML. Phosphorylation of p53/TP53 at 'Ser-20' by CHEK2 may alleviate inhibition by MDM2, leading to accumulation of active p53/TP53. Phosphorylation of MDM4 may also reduce degradation of p53/TP53. Also controls the transcription of pro-apoptotic genes through phosphorylation of the transcription factor E2F1. Tumor suppressor, it may also have a DNA damage-independent function in mitotic spindle assembly by phosphorylating BRCA1. Its absence may be a cause of the chromosomal instability observed in some cancer cells. Promotes the CCAR2-SIRT1 association and is required for CCAR2-mediated SIRT1 inhibition. Under oxidative stress, promotes ATG7 ubiquitination by phosphorylating the E3 ubiquitin ligase TRIM32 at 'Ser-55' leading to positive regulation of the autophagosme assembly. In terms of biological role, (Microbial infection) Phosphorylates herpes simplex virus 1/HHV-1 protein ICP0 and thus activates its SUMO-targeted ubiquitin ligase activity. The polypeptide is Serine/threonine-protein kinase Chk2 (Homo sapiens (Human)).